Consider the following 1100-residue polypeptide: Guanylate cyclase 2G (1100 aa).

The signal sequence occupies residues 1–43 (MASRARSEPPLEHRFYGGAESHAGHSSLVLTLFVVMLMTCLEA). Topologically, residues 44 to 481 (AKLTVGFHAP…GAGMTASVTA (438 aa)) are extracellular. Asparagine 55, asparagine 85, asparagine 94, asparagine 418, and asparagine 443 each carry an N-linked (GlcNAc...) asparagine glycan. Residues 482 to 502 (VIPTVTLLVVASAAAITGLML) traverse the membrane as a helical segment. Topologically, residues 503-1100 (WRLRGKVQNH…EEEAKVPEIL (598 aa)) are cytoplasmic. The region spanning 549-826 (STVKISADCG…PAFPSIKKTL (278 aa)) is the Protein kinase domain. Residues 901-1031 (TIFFSDIVGF…DTVNMASRME (131 aa)) enclose the Guanylate cyclase domain.

This sequence belongs to the adenylyl cyclase class-4/guanylyl cyclase family. As to quaternary structure, homooligomer. May interact with NPR1/GC-A. In terms of processing, N-glycosylated. In terms of tissue distribution, expressed in lung, kidney and skeletal muscle. Low levels in intestine.

It is found in the cell membrane. The protein localises to the cytoplasm. It catalyses the reaction GTP = 3',5'-cyclic GMP + diphosphate. The sequence is that of Guanylate cyclase 2G (Gucy2g) from Rattus norvegicus (Rat).